Consider the following 291-residue polypeptide: MVRYPAVAGSFYPGDETLIEMLEKFFRDLGEHGSERKITAGVVPHAGYVFSGYTASRTFKAIYEDGLPETFVILGPNHTGIGSPIAVYPSGSWLTPLGEIEVDSEMAKTIAKLSGIADLDELAHKYEHSIEVQLPFIQYLAEKARTDVRIVPITLGIQDEEVVEDLGKAIYEAANELDRDVVIIASTDFMHYGPAYGYVPFRARADELPHRVKEWDFRVIQKILDFDVKGMFGELRKMDHTMCGPGGVGTAIVYSRLAGALEAELLHYTTSFEVSRSTDAIVGYASIVFRK.

Belongs to the MEMO1 family.

This is MEMO1 family protein TON_0132 from Thermococcus onnurineus (strain NA1).